A 140-amino-acid polypeptide reads, in one-letter code: Holo-[acyl-carrier-protein] synthase (140 aa).

2 residues coordinate Mg(2+): aspartate 8 and glutamate 62.

Belongs to the P-Pant transferase superfamily. AcpS family. Requires Mg(2+) as cofactor.

The protein resides in the cytoplasm. It carries out the reaction apo-[ACP] + CoA = holo-[ACP] + adenosine 3',5'-bisphosphate + H(+). In terms of biological role, transfers the 4'-phosphopantetheine moiety from coenzyme A to a Ser of acyl-carrier-protein. The chain is Holo-[acyl-carrier-protein] synthase from Cupriavidus taiwanensis (strain DSM 17343 / BCRC 17206 / CCUG 44338 / CIP 107171 / LMG 19424 / R1) (Ralstonia taiwanensis (strain LMG 19424)).